Consider the following 322-residue polypeptide: Mitochondrial glutamate carrier 1 (322 aa).

Solcar repeat units lie at residues 6–93 (ISLP…FRYQ), 101–214 (LTLF…LNEL), and 223–312 (SPFY…GIAE). 6 consecutive transmembrane segments (helical) span residues 12-32 (LING…IDLA), 62-82 (YFGM…EKAI), 107-127 (MLAG…MEML), 189-209 (GLGA…PLFA), 223-243 (SPFY…AVAV), and 292-312 (ALVI…GIAE).

Belongs to the mitochondrial carrier (TC 2.A.29) family.

The protein resides in the mitochondrion inner membrane. It catalyses the reaction L-glutamate(in) + H(+)(in) = L-glutamate(out) + H(+)(out). Functionally, mitochondrial glutamate/H(+) symporter. Responsible for the transport of glutamate from the cytosol into the mitochondrial matrix with the concomitant import of a proton. Plays a role in the control of glucose-stimulated insulin secretion. The sequence is that of Mitochondrial glutamate carrier 1 (SLC25A22) from Bos taurus (Bovine).